The primary structure comprises 225 residues: MANINFGFDHHAKKLYSGAIENSINSQLVPMVIETSGRGERAFDIFSRLLRERIIFLGSPIDEHVAGLIIAQLIFLESEDPERDIYIYINSPGGSVSAGLGIYDTMQYIRPDISTVCVGMAASMGAFLLASGTSGKRASLPHSRIMIHQPSGGAQGQETDILIQAREIEKIRHLLEDLLAKHTGQEVSRIREDSERDRWMSAVEAKEYGLIDQIFEKRPAPKSEE.

The Nucleophile role is filled by S123. The active site involves H148.

This sequence belongs to the peptidase S14 family. In terms of assembly, fourteen ClpP subunits assemble into 2 heptameric rings which stack back to back to give a disk-like structure with a central cavity, resembling the structure of eukaryotic proteasomes.

It is found in the cytoplasm. The enzyme catalyses Hydrolysis of proteins to small peptides in the presence of ATP and magnesium. alpha-casein is the usual test substrate. In the absence of ATP, only oligopeptides shorter than five residues are hydrolyzed (such as succinyl-Leu-Tyr-|-NHMec, and Leu-Tyr-Leu-|-Tyr-Trp, in which cleavage of the -Tyr-|-Leu- and -Tyr-|-Trp bonds also occurs).. Functionally, cleaves peptides in various proteins in a process that requires ATP hydrolysis. Has a chymotrypsin-like activity. Plays a major role in the degradation of misfolded proteins. The sequence is that of ATP-dependent Clp protease proteolytic subunit from Chlorobaculum tepidum (strain ATCC 49652 / DSM 12025 / NBRC 103806 / TLS) (Chlorobium tepidum).